A 472-amino-acid polypeptide reads, in one-letter code: Deoxyribodipyrimidine photo-lyase (472 aa).

A Photolyase/cryptochrome alpha/beta domain is found at 2–134 (TTHLVWFRQD…VCEGFDDSVI (133 aa)). (6R)-5,10-methylene-5,6,7,8-tetrahydrofolate contacts are provided by asparagine 109 and glutamate 110. Residue tyrosine 223 coordinates FAD. Arginine 227 provides a ligand contact to DNA. Residues 235–239 (TSRLS), tryptophan 272, and 275–282 (ELIWREFY) contribute to the FAD site. 2 interaction with DNA regions span residues 275-282 (ELIWREFY) and 342-343 (NR). FAD is bound at residue 373-375 (DGD). Glutamine 405 serves as a coordination point for DNA.

The protein belongs to the DNA photolyase class-1 family. Monomer. Requires FAD as cofactor. The cofactor is (6R)-5,10-methylene-5,6,7,8-tetrahydrofolate.

The catalysed reaction is cyclobutadipyrimidine (in DNA) = 2 pyrimidine residues (in DNA).. In terms of biological role, involved in repair of UV radiation-induced DNA damage. Catalyzes the light-dependent monomerization (300-600 nm) of cyclobutyl pyrimidine dimers (in cis-syn configuration), which are formed between adjacent bases on the same DNA strand upon exposure to ultraviolet radiation. This Escherichia coli (strain K12) protein is Deoxyribodipyrimidine photo-lyase (phrB).